A 296-amino-acid chain; its full sequence is Nitrogenase iron protein (296 aa).

12-19 serves as a coordination point for ATP; it reads GKGGIGKS. C100 is a binding site for [4Fe-4S] cluster. Residue R103 is modified to ADP-ribosylarginine; by dinitrogenase reductase ADP-ribosyltransferase. A [4Fe-4S] cluster-binding site is contributed by C134.

Belongs to the NifH/BchL/ChlL family. Homodimer. [4Fe-4S] cluster is required as a cofactor. The reversible ADP-ribosylation of Arg-103 inactivates the nitrogenase reductase and regulates nitrogenase activity.

It carries out the reaction N2 + 8 reduced [2Fe-2S]-[ferredoxin] + 16 ATP + 16 H2O = H2 + 8 oxidized [2Fe-2S]-[ferredoxin] + 2 NH4(+) + 16 ADP + 16 phosphate + 6 H(+). Its function is as follows. The key enzymatic reactions in nitrogen fixation are catalyzed by the nitrogenase complex, which has 2 components: the iron protein and the molybdenum-iron protein. The protein is Nitrogenase iron protein of Acidithiobacillus ferrooxidans (strain ATCC 23270 / DSM 14882 / CIP 104768 / NCIMB 8455) (Ferrobacillus ferrooxidans (strain ATCC 23270)).